The primary structure comprises 369 residues: Probable dual-specificity RNA methyltransferase RlmN (369 aa).

Residue Glu108 is the Proton acceptor of the active site. The 238-residue stretch at 114-351 (YPDRATLCIS…LAQGVSCTVR (238 aa)) folds into the Radical SAM core domain. Cys121 and Cys362 are disulfide-bonded. The [4Fe-4S] cluster site is built by Cys128, Cys132, and Cys135. S-adenosyl-L-methionine contacts are provided by residues 183-184 (GE), Ser217, 240-242 (SLH), and Asn319. Cys362 acts as the S-methylcysteine intermediate in catalysis.

This sequence belongs to the radical SAM superfamily. RlmN family. The cofactor is [4Fe-4S] cluster.

It is found in the cytoplasm. It carries out the reaction adenosine(2503) in 23S rRNA + 2 reduced [2Fe-2S]-[ferredoxin] + 2 S-adenosyl-L-methionine = 2-methyladenosine(2503) in 23S rRNA + 5'-deoxyadenosine + L-methionine + 2 oxidized [2Fe-2S]-[ferredoxin] + S-adenosyl-L-homocysteine. The enzyme catalyses adenosine(37) in tRNA + 2 reduced [2Fe-2S]-[ferredoxin] + 2 S-adenosyl-L-methionine = 2-methyladenosine(37) in tRNA + 5'-deoxyadenosine + L-methionine + 2 oxidized [2Fe-2S]-[ferredoxin] + S-adenosyl-L-homocysteine. In terms of biological role, specifically methylates position 2 of adenine 2503 in 23S rRNA and position 2 of adenine 37 in tRNAs. The chain is Probable dual-specificity RNA methyltransferase RlmN from Rhodococcus jostii (strain RHA1).